A 381-amino-acid chain; its full sequence is Cytochrome b (381 aa).

4 helical membrane passes run 34 to 54 (FGSL…FLAM), 78 to 99 (WLIR…YLHI), 114 to 134 (WNIG…GYVL), and 179 to 199 (FFAF…IHLL). Residues histidine 84 and histidine 98 each coordinate heme b. Histidine 183 and histidine 197 together coordinate heme b. Histidine 202 is an a ubiquinone binding site. The next 4 membrane-spanning stretches (helical) occupy residues 227–247 (YKDL…ALFT), 289–309 (LGGV…PLLH), 321–341 (LTQI…WIGG), and 348–368 (FIMV…IIMP).

The protein belongs to the cytochrome b family. In terms of assembly, the cytochrome bc1 complex contains 3 respiratory subunits (MT-CYB, CYC1 and UQCRFS1), 2 core proteins (UQCRC1 and UQCRC2) and probably 6 low-molecular weight proteins. Heme b is required as a cofactor.

The protein localises to the mitochondrion inner membrane. Component of the ubiquinol-cytochrome c reductase complex (complex III or cytochrome b-c1 complex) that is part of the mitochondrial respiratory chain. The b-c1 complex mediates electron transfer from ubiquinol to cytochrome c. Contributes to the generation of a proton gradient across the mitochondrial membrane that is then used for ATP synthesis. This Negaprion brevirostris (Lemon shark) protein is Cytochrome b (mt-cyb).